A 471-amino-acid chain; its full sequence is Chromosomal replication initiator protein DnaA (471 aa).

Positions 1–91 (MVDVSETTER…KYWQDESDAV (91 aa)) are domain I, interacts with DnaA modulators. The tract at residues 91-133 (VYSVDICVSDGVGVQPQMAEHPDGAVDGPPVVMVGGTYDHLSS) is domain II. Residues 134 to 352 (PLDPRFTFDN…GALNKVVAHS (219 aa)) are domain III, AAA+ region. Gly-180, Gly-182, Lys-183, and Thr-184 together coordinate ATP. A domain IV, binds dsDNA region spans residues 353–471 (SLVGRSVTIE…DINLLIRMLR (119 aa)).

Belongs to the DnaA family. As to quaternary structure, oligomerizes as a right-handed, spiral filament on DNA at oriC.

The protein localises to the cytoplasm. In terms of biological role, plays an essential role in the initiation and regulation of chromosomal replication. ATP-DnaA binds to the origin of replication (oriC) to initiate formation of the DNA replication initiation complex once per cell cycle. Binds the DnaA box (a 9 base pair repeat at the origin) and separates the double-stranded (ds)DNA. Forms a right-handed helical filament on oriC DNA; dsDNA binds to the exterior of the filament while single-stranded (ss)DNA is stabiized in the filament's interior. The ATP-DnaA-oriC complex binds and stabilizes one strand of the AT-rich DNA unwinding element (DUE), permitting loading of DNA polymerase. After initiation quickly degrades to an ADP-DnaA complex that is not apt for DNA replication. Binds acidic phospholipids. This chain is Chromosomal replication initiator protein DnaA, found in Anaplasma marginale (strain St. Maries).